The following is a 1088-amino-acid chain: Ran-binding protein 17 (1088 aa).

The residue at position 2 (alanine 2) is an N-acetylalanine. Serine 569 carries the post-translational modification Phosphoserine.

Belongs to the exportin family. As to quaternary structure, binds to nucleoporins and the GTP-bound form of Ran. In terms of tissue distribution, highly expressed in testis, moderately in pancreas and weakly in other tissues studied.

The protein localises to the cytoplasm. Its subcellular location is the nucleus. It is found in the nuclear pore complex. In terms of biological role, may function as a nuclear transport receptor. In Homo sapiens (Human), this protein is Ran-binding protein 17 (RANBP17).